The primary structure comprises 437 residues: Probable receptor-like serine/threonine-protein kinase At4g34500 (437 aa).

The helical transmembrane segment at 25–45 threads the bilayer; sequence LVIAICSVFILLISLLIFLFV. In terms of domain architecture, Protein kinase spans 145–426; that stretch reads FSDDNMIGEG…MLEAEDFPFR (282 aa). Residues 151-159 and Lys-173 contribute to the ATP site; that span reads IGEGGYGVV. Tyr-220 is subject to Phosphotyrosine. Asp-273 (proton acceptor) is an active-site residue. Ser-277 carries the post-translational modification Phosphoserine. 2 positions are modified to phosphothreonine: Thr-307 and Thr-312. Position 320 is a phosphotyrosine (Tyr-320).

The protein belongs to the protein kinase superfamily. Ser/Thr protein kinase family.

It is found in the cell membrane. The enzyme catalyses L-seryl-[protein] + ATP = O-phospho-L-seryl-[protein] + ADP + H(+). It catalyses the reaction L-threonyl-[protein] + ATP = O-phospho-L-threonyl-[protein] + ADP + H(+). This is Probable receptor-like serine/threonine-protein kinase At4g34500 from Arabidopsis thaliana (Mouse-ear cress).